The sequence spans 263 residues: 5'-nucleotidase SurE (263 aa).

D11, D12, S42, and N96 together coordinate a divalent metal cation.

It belongs to the SurE nucleotidase family. A divalent metal cation is required as a cofactor.

The protein resides in the cytoplasm. The catalysed reaction is a ribonucleoside 5'-phosphate + H2O = a ribonucleoside + phosphate. In terms of biological role, nucleotidase that shows phosphatase activity on nucleoside 5'-monophosphates. The chain is 5'-nucleotidase SurE from Methanocorpusculum labreanum (strain ATCC 43576 / DSM 4855 / Z).